Consider the following 101-residue polypeptide: Small ribosomal subunit protein uS14 (101 aa).

Belongs to the universal ribosomal protein uS14 family. As to quaternary structure, part of the 30S ribosomal subunit. Contacts proteins S3 and S10.

Its function is as follows. Binds 16S rRNA, required for the assembly of 30S particles and may also be responsible for determining the conformation of the 16S rRNA at the A site. The chain is Small ribosomal subunit protein uS14 from Pasteurella multocida (strain Pm70).